Here is a 278-residue protein sequence, read N- to C-terminus: Tryptophan 2,3-dioxygenase (278 aa).

Residues 47-51 (FIIQH), tyrosine 110, and arginine 114 contribute to the substrate site. Position 236 (histidine 236) interacts with heme. A substrate-binding site is contributed by threonine 250.

This sequence belongs to the tryptophan 2,3-dioxygenase family. In terms of assembly, homotetramer. It depends on heme as a cofactor.

The catalysed reaction is L-tryptophan + O2 = N-formyl-L-kynurenine. It participates in amino-acid degradation; L-tryptophan degradation via kynurenine pathway; L-kynurenine from L-tryptophan: step 1/2. In terms of biological role, heme-dependent dioxygenase that catalyzes the oxidative cleavage of the L-tryptophan (L-Trp) pyrrole ring and converts L-tryptophan to N-formyl-L-kynurenine. Catalyzes the oxidative cleavage of the indole moiety. This chain is Tryptophan 2,3-dioxygenase, found in Ruegeria pomeroyi (strain ATCC 700808 / DSM 15171 / DSS-3) (Silicibacter pomeroyi).